We begin with the raw amino-acid sequence, 426 residues long: Protein arginine methyltransferase NDUFAF7 homolog, mitochondrial (426 aa).

It belongs to the NDUFAF7 family.

The protein localises to the mitochondrion. It catalyses the reaction L-arginyl-[protein] + 2 S-adenosyl-L-methionine = N(omega),N(omega)'-dimethyl-L-arginyl-[protein] + 2 S-adenosyl-L-homocysteine + 2 H(+). Arginine methyltransferase involved in the assembly or stability of mitochondrial NADH:ubiquinone oxidoreductase complex (complex I). This chain is Protein arginine methyltransferase NDUFAF7 homolog, mitochondrial, found in Caenorhabditis elegans.